A 260-amino-acid chain; its full sequence is 3-methyl-2-oxobutanoate hydroxymethyltransferase (260 aa).

Mg(2+) is bound by residues Asp-42 and Asp-81. 3-methyl-2-oxobutanoate is bound by residues 42–43 (DS), Asp-81, and Lys-109. Mg(2+) is bound at residue Glu-111. Glu-178 (proton acceptor) is an active-site residue.

Belongs to the PanB family. In terms of assembly, homodecamer; pentamer of dimers. The cofactor is Mg(2+).

It localises to the cytoplasm. The catalysed reaction is 3-methyl-2-oxobutanoate + (6R)-5,10-methylene-5,6,7,8-tetrahydrofolate + H2O = 2-dehydropantoate + (6S)-5,6,7,8-tetrahydrofolate. It participates in cofactor biosynthesis; (R)-pantothenate biosynthesis; (R)-pantoate from 3-methyl-2-oxobutanoate: step 1/2. Its function is as follows. Catalyzes the reversible reaction in which hydroxymethyl group from 5,10-methylenetetrahydrofolate is transferred onto alpha-ketoisovalerate to form ketopantoate. The sequence is that of 3-methyl-2-oxobutanoate hydroxymethyltransferase from Ruthia magnifica subsp. Calyptogena magnifica.